The chain runs to 266 residues: Hydroxyethylthiazole kinase (266 aa).

Residue M45 participates in substrate binding. ATP contacts are provided by R120 and T165. A192 serves as a coordination point for substrate.

The protein belongs to the Thz kinase family. The cofactor is Mg(2+).

The enzyme catalyses 5-(2-hydroxyethyl)-4-methylthiazole + ATP = 4-methyl-5-(2-phosphooxyethyl)-thiazole + ADP + H(+). It participates in cofactor biosynthesis; thiamine diphosphate biosynthesis; 4-methyl-5-(2-phosphoethyl)-thiazole from 5-(2-hydroxyethyl)-4-methylthiazole: step 1/1. Catalyzes the phosphorylation of the hydroxyl group of 4-methyl-5-beta-hydroxyethylthiazole (THZ). This Psychrobacter sp. (strain PRwf-1) protein is Hydroxyethylthiazole kinase.